A 489-amino-acid polypeptide reads, in one-letter code: Nuclear distribution protein PAC1 (489 aa).

Residues 66-98 (STVLRLQKKIIDLENEISNLNNIINSSNSDNNG) are a coiled coil. WD repeat units follow at residues 119–158 (QCEN…NTIP), 164–205 (AHTR…RTLN), 206–246 (GHEH…SLKS), 249–291 (GHSE…GLAM), 328–368 (IPLE…IAPH), 389–428 (GHSS…ETGS), and 437–486 (GHDG…NSIK).

The protein belongs to the WD repeat LIS1/nudF family. As to quaternary structure, self-associates. Interacts with NDL1 and dynein.

It localises to the cytoplasm. The protein localises to the cytoskeleton. It is found in the spindle pole. Its function is as follows. Positively regulates the activity of the minus-end directed microtubule motor protein dynein. Plays a central role in positioning the mitotic spindle at the bud neck during cell division. Targets cytoplasmic dynein to microtubule plus ends, thereby promoting dynein-mediated microtubule sliding along the bud cortex and consequently the movement of the mitotic spindle to the bud neck. The sequence is that of Nuclear distribution protein PAC1 from Candida dubliniensis (strain CD36 / ATCC MYA-646 / CBS 7987 / NCPF 3949 / NRRL Y-17841) (Yeast).